We begin with the raw amino-acid sequence, 352 residues long: MTIAVGRVRQERGWFDIVDDWLKRDRFVFIGWSGLLLFPCAYLALGGWLTGTTFVTSWYTHGLASSYLEGCNFLTVAVSTPADSMGHSLLLLWGPEAQGDFTRWCQIGGLWTFVALHGALGLIGFMLRQFEIARLVGVRPYNAIAFSAPIAVFVSVFLIYPLGQSSWFFAPSFGVAGIFRFLLFFQGFHNWTLNPFHMMGVAGVLGGALLCAIHGATVENTLFQDGEAASTFRAFEPTQSEETYSMVTANRYWSQIFGIAFSNKRWLHFFMLFVPVTGLWMSSIGVVGLALNLRAYDFISQEVRAAEDPEFETFYTKNILLNEGIRAWMAPQDQPHERFEFPEEVLPRGNAL.

The helical transmembrane segment at 40-60 (CAYLALGGWLTGTTFVTSWYT) threads the bilayer. His-117 lines the chlorophyll a pocket. The chain crosses the membrane as a helical span at residues 124-140 (GFMLRQFEIARLVGVRP). The pheophytin a site is built by Gln-129 and Asn-142. A helical transmembrane segment spans residues 152–165 (VFVSVFLIYPLGQS). Position 197 (His-197) interacts with chlorophyll a. The helical transmembrane segment at 207–227 (GALLCAIHGATVENTLFQDGE) threads the bilayer. Residues His-214 and Phe-261 each contribute to the a plastoquinone site. Residue His-214 coordinates Fe cation. His-268 contacts Fe cation. The helical transmembrane segment at 278–294 (GLWMSSIGVVGLALNLR) threads the bilayer.

This sequence belongs to the reaction center PufL/M/PsbA/D family. In terms of assembly, PSII is composed of 1 copy each of membrane proteins PsbA, PsbB, PsbC, PsbD, PsbE, PsbF, PsbH, PsbI, PsbJ, PsbK, PsbL, PsbM, PsbT, PsbX, PsbY, PsbZ, Psb30/Ycf12, peripheral proteins PsbO, CyanoQ (PsbQ), PsbU, PsbV and a large number of cofactors. It forms dimeric complexes. The D1/D2 heterodimer binds P680, chlorophylls that are the primary electron donor of PSII, and subsequent electron acceptors. It shares a non-heme iron and each subunit binds pheophytin, quinone, additional chlorophylls, carotenoids and lipids. There is also a Cl(-1) ion associated with D1 and D2, which is required for oxygen evolution. The PSII complex binds additional chlorophylls, carotenoids and specific lipids. serves as cofactor.

Its subcellular location is the cellular thylakoid membrane. The enzyme catalyses 2 a plastoquinone + 4 hnu + 2 H2O = 2 a plastoquinol + O2. Photosystem II (PSII) is a light-driven water:plastoquinone oxidoreductase that uses light energy to abstract electrons from H(2)O, generating O(2) and a proton gradient subsequently used for ATP formation. It consists of a core antenna complex that captures photons, and an electron transfer chain that converts photonic excitation into a charge separation. The D1/D2 (PsbA/PsbD) reaction center heterodimer binds P680, the primary electron donor of PSII as well as several subsequent electron acceptors. D2 is needed for assembly of a stable PSII complex. The polypeptide is Photosystem II D2 protein (Synechococcus sp. (strain JA-2-3B'a(2-13)) (Cyanobacteria bacterium Yellowstone B-Prime)).